The following is a 666-amino-acid chain: uncharacterized protein (666 aa).

The protein belongs to the MG032/MG096/MG288 family.

This is an uncharacterized protein from Mycoplasma genitalium (strain ATCC 33530 / DSM 19775 / NCTC 10195 / G37) (Mycoplasmoides genitalium).